The following is a 29-amino-acid chain: Trypsin inhibitor 2 (29 aa).

3 cysteine pairs are disulfide-bonded: cysteine 3-cysteine 20, cysteine 10-cysteine 22, and cysteine 16-cysteine 28.

This sequence belongs to the protease inhibitor I7 (squash-type serine protease inhibitor) family.

It localises to the secreted. Its function is as follows. Inhibits trypsin. The chain is Trypsin inhibitor 2 from Bryonia dioica (Red bryony).